A 457-amino-acid chain; its full sequence is Putative adhesion G protein-coupled receptor E4P (457 aa).

Residues Met1–Ser14 form the signal peptide. 6 disulfides stabilise this stretch: Cys15/Cys24, Cys18/Cys30, Cys32/Cys52, Cys58/Cys71, Cys65/Cys80, and Cys82/Cys103. Residues Cys15–Glu53 enclose the EGF-like 1 domain. The Extracellular portion of the chain corresponds to Pro16–Thr191. Asn26 is a glycosylation site (N-linked (GlcNAc...) asparagine). An EGF-like 2; calcium-binding domain is found at Asp54 to Tyr104. 2 N-linked (GlcNAc...) asparagine glycosylation sites follow: Asn106 and Asn162. A GAIN-B domain is found at Asp134 to Glu186. Intrachain disulfides connect Cys141–Cys168 and Cys156–Cys170. The segment at Cys141 to Glu186 is GPS. A helical membrane pass occupies residues Val192–Phe212. The Cytoplasmic segment spans residues Leu213–Thr223. The chain crosses the membrane as a helical span at residues Ser224–Ile244. Asn245 carries N-linked (GlcNAc...) asparagine glycosylation. The Extracellular portion of the chain corresponds to Asn245–Glu250. The chain crosses the membrane as a helical span at residues Val251–Met271. The Cytoplasmic segment spans residues Leu272–Arg299. A helical membrane pass occupies residues Phe300 to Gly320. The Extracellular segment spans residues Pro321–Gly336. A helical transmembrane segment spans residues Phe337 to Phe357. At Gln358–Thr384 the chain is on the cytoplasmic side. Residues Phe385–Val405 traverse the membrane as a helical segment. The Extracellular portion of the chain corresponds to Glu406 to Gly413. A helical membrane pass occupies residues Ser414–Val434. The Cytoplasmic portion of the chain corresponds to His435 to Asn457.

The protein belongs to the G-protein coupled receptor 2 family. Adhesion G-protein coupled receptor (ADGR) subfamily. As to quaternary structure, forms a heterodimer, consisting of a large extracellular region (alpha subunit) non-covalently linked to a seven-transmembrane moiety (beta subunit). Post-translationally, glycosylated. Proteolytically cleaved into 2 subunits, an extracellular alpha subunit and a seven-transmembrane subunit.

Its subcellular location is the cell membrane. The protein resides in the secreted. May mediate the cellular interaction between myeloid cells and B-cells. In Homo sapiens (Human), this protein is Putative adhesion G protein-coupled receptor E4P.